A 63-amino-acid polypeptide reads, in one-letter code: uncharacterized protein (63 aa).

This is an uncharacterized protein from Escherichia coli (strain K12).